Reading from the N-terminus, the 123-residue chain is MIQEQTMLNVADNSGARRVMCIKVLGGSHRRYAGVGDIIKITIKEAIPRGKVKKGDVLKAVVVRTKKGVRRPDGSVVRFDGNACVLLNNNSEQPIGTRIFGPVTRELRSEKFMKIISLAPEVL.

The protein belongs to the universal ribosomal protein uL14 family. Part of the 50S ribosomal subunit. Forms a cluster with proteins L3 and L19. In the 70S ribosome, L14 and L19 interact and together make contacts with the 16S rRNA in bridges B5 and B8.

In terms of biological role, binds to 23S rRNA. Forms part of two intersubunit bridges in the 70S ribosome. The polypeptide is Large ribosomal subunit protein uL14 (Cronobacter sakazakii (strain ATCC BAA-894) (Enterobacter sakazakii)).